We begin with the raw amino-acid sequence, 217 residues long: Ribonuclease HII (217 aa).

The 190-residue stretch at 27-216 (SRIAGVDEAG…VKESIREGIC (190 aa)) folds into the RNase H type-2 domain. Residues D33, E34, and D126 each contribute to the a divalent metal cation site.

The protein belongs to the RNase HII family. The cofactor is Mn(2+). It depends on Mg(2+) as a cofactor.

The protein localises to the cytoplasm. It carries out the reaction Endonucleolytic cleavage to 5'-phosphomonoester.. Functionally, endonuclease that specifically degrades the RNA of RNA-DNA hybrids. The protein is Ribonuclease HII (rnhB) of Chlamydia muridarum (strain MoPn / Nigg).